Here is a 286-residue protein sequence, read N- to C-terminus: N-alpha-acetyltransferase 80 (286 aa).

A disordered region spans residues 33–54 (TFNPGPTELTLDPEHQPEETPA). The region spanning 60-207 (LTLEPVHRRP…VFTSRRLPAT (148 aa)) is the N-acetyltransferase domain. Substrate-binding positions include Arg-85 and 90-93 (RLHS). Acetyl-CoA-binding positions include 141–143 (VVV), 149–154 (GRGFGR), and Gln-179. The interval 212-269 (FPTAPSPRPPRKAPNLTAQAAPRGPKGPPLPPPPPLPECLTISPPVPSGPPSKSLLET) is disordered. The span at 236 to 248 (PKGPPLPPPPPLP) shows a compositional bias: pro residues.

The protein belongs to the acetyltransferase family. Strongly expressed in heart and skeletal muscle, followed by brain and pancreas, with weak expression in kidney, liver, and lung and no expression in placenta.

It localises to the cytoplasm. The protein localises to the cytosol. It carries out the reaction N-terminal L-aspartyl-L-aspartyl-L-aspartyl-[protein] + acetyl-CoA = N-terminal N-acetyl-L-aspartyl-L-aspartyl-L-aspartyl-[protein] + CoA + H(+). It catalyses the reaction N-terminal L-glutamyl-L-glutamyl-L-glutamyl-[protein] + acetyl-CoA = N-terminal N-acetyl-L-glutamyl-L-glutamyl-L-glutamyl-[protein] + CoA + H(+). N-alpha-acetyltransferase that specifically mediates the acetylation of the acidic amino terminus of processed forms of beta- and gamma-actin (ACTB and ACTG, respectively). N-terminal acetylation of processed beta- and gamma-actin regulates actin filament depolymerization and elongation. In vivo, preferentially displays N-terminal acetyltransferase activity towards acid N-terminal sequences starting with Asp-Asp-Asp and Glu-Glu-Glu. In vitro, shows high activity towards Met-Asp-Glu-Leu and Met-Asp-Asp-Asp. May act as a tumor suppressor. This Homo sapiens (Human) protein is N-alpha-acetyltransferase 80.